Reading from the N-terminus, the 337-residue chain is Glyceraldehyde-3-phosphate dehydrogenase, cytosolic (337 aa).

The interval 1–151 (MAKVKVGING…YKSDLNIVSN (151 aa)) is binding to NAD. NAD(+)-binding positions include 13–14 (RI), Asp35, and Arg82. A catalytic region spans residues 152-337 (ASCTTNCLAP…DLIMHISKCQ (186 aa)). Residues 153–155 (SCT), Thr184, 213–214 (TG), and Arg236 contribute to the D-glyceraldehyde 3-phosphate site. Residue Cys154 is the Nucleophile of the active site. An NAD(+)-binding site is contributed by Asn318.

It belongs to the glyceraldehyde-3-phosphate dehydrogenase family. Homotetramer.

It is found in the cytoplasm. It carries out the reaction D-glyceraldehyde 3-phosphate + phosphate + NAD(+) = (2R)-3-phospho-glyceroyl phosphate + NADH + H(+). The protein operates within carbohydrate degradation; glycolysis; pyruvate from D-glyceraldehyde 3-phosphate: step 1/5. Key enzyme in glycolysis that catalyzes the first step of the pathway by converting D-glyceraldehyde 3-phosphate (G3P) into 3-phospho-D-glyceroyl phosphate. Essential for the maintenance of cellular ATP levels and carbohydrate metabolism. In Mesembryanthemum crystallinum (Common ice plant), this protein is Glyceraldehyde-3-phosphate dehydrogenase, cytosolic (GAPC).